Reading from the N-terminus, the 316-residue chain is Pantothenate kinase (316 aa).

95-102 (GSVAVGKS) contributes to the ATP binding site.

Belongs to the prokaryotic pantothenate kinase family.

The protein localises to the cytoplasm. The enzyme catalyses (R)-pantothenate + ATP = (R)-4'-phosphopantothenate + ADP + H(+). Its pathway is cofactor biosynthesis; coenzyme A biosynthesis; CoA from (R)-pantothenate: step 1/5. This chain is Pantothenate kinase, found in Yersinia pseudotuberculosis serotype O:3 (strain YPIII).